The sequence spans 186 residues: Pyridoxal 5'-phosphate synthase subunit PdxT (186 aa).

47–49 (GES) lines the L-glutamine pocket. Cys76 serves as the catalytic Nucleophile. L-glutamine is bound by residues Arg102 and 130–131 (IR). Catalysis depends on charge relay system residues His166 and Glu168.

It belongs to the glutaminase PdxT/SNO family. As to quaternary structure, in the presence of PdxS, forms a dodecamer of heterodimers. Only shows activity in the heterodimer.

It catalyses the reaction aldehydo-D-ribose 5-phosphate + D-glyceraldehyde 3-phosphate + L-glutamine = pyridoxal 5'-phosphate + L-glutamate + phosphate + 3 H2O + H(+). The enzyme catalyses L-glutamine + H2O = L-glutamate + NH4(+). It functions in the pathway cofactor biosynthesis; pyridoxal 5'-phosphate biosynthesis. Its function is as follows. Catalyzes the hydrolysis of glutamine to glutamate and ammonia as part of the biosynthesis of pyridoxal 5'-phosphate. The resulting ammonia molecule is channeled to the active site of PdxS. The protein is Pyridoxal 5'-phosphate synthase subunit PdxT of Staphylococcus epidermidis (strain ATCC 35984 / DSM 28319 / BCRC 17069 / CCUG 31568 / BM 3577 / RP62A).